The following is a 270-amino-acid chain: Phospholysine phosphohistidine inorganic pyrophosphate phosphatase (270 aa).

Residues Asp-17 and Ser-19 each contribute to the Mg(2+) site. Substrate-binding positions include 17 to 19, 54 to 55, and Lys-189; these read DIS and TN. Asp-214 lines the Mg(2+) pocket.

It belongs to the HAD-like hydrolase superfamily. As to quaternary structure, homodimer. The cofactor is Mg(2+). As to expression, detected in liver (at protein level).

It localises to the cytoplasm. The protein resides in the nucleus. The catalysed reaction is diphosphate + H2O = 2 phosphate + H(+). Phosphatase that hydrolyzes imidodiphosphate, 3-phosphohistidine and 6-phospholysine. Has broad substrate specificity and can also hydrolyze inorganic diphosphate, but with lower efficiency. This is Phospholysine phosphohistidine inorganic pyrophosphate phosphatase (LHPP) from Bos taurus (Bovine).